We begin with the raw amino-acid sequence, 73 residues long: Large ribosomal subunit protein uL30 (73 aa).

The protein belongs to the universal ribosomal protein uL30 family. Part of the 50S ribosomal subunit.

The sequence is that of Large ribosomal subunit protein uL30 from Borrelia hermsii (strain HS1 / DAH).